A 289-amino-acid chain; its full sequence is MSEIKEVRNKIKCITNTQKITKAMEMVSISKMKKAEVKMNSGRPYLKTIKEIINNFISNNTRYQHVYLEQRAVKKIGIIIISTDRGLCGNLNVTLFKKILDFIQNYNNRNITSDLSILGLKGLSFFKSLSNKIVYFNDYAKNNYTFSDCLNCNSIFMKLYSIGEIDRLFLAYNKFKSTLIQIPSIIQLLPLSKKKIHCHNNHWDYIYESDSKLLLNKLLNNYLEFQIYQASLENYTSEQAARMIAMKQATDNSKDLIRELQIIYNKARQDNITQELTEIVSGAAAISLN.

The protein belongs to the ATPase gamma chain family. F-type ATPases have 2 components, CF(1) - the catalytic core - and CF(0) - the membrane proton channel. CF(1) has five subunits: alpha(3), beta(3), gamma(1), delta(1), epsilon(1). CF(0) has three main subunits: a, b and c.

The protein resides in the cell membrane. In terms of biological role, produces ATP from ADP in the presence of a proton gradient across the membrane. The gamma chain is believed to be important in regulating ATPase activity and the flow of protons through the CF(0) complex. The sequence is that of ATP synthase gamma chain from Buchnera aphidicola subsp. Melaphis rhois.